The sequence spans 314 residues: MIOREX complex component 8 (314 aa).

Residues T132 to L312 enclose the EngB-type G domain. GTP-binding positions include G140 to S147, G173 to T177, D191 to G194, T253 to D256, and S290 to T292. Mg(2+) is bound by residues S147 and T175.

The protein belongs to the TRAFAC class TrmE-Era-EngA-EngB-Septin-like GTPase superfamily. EngB GTPase family. As to quaternary structure, associates with the mitochondrial ribosome. It depends on Mg(2+) as a cofactor. In terms of processing, sumoylated upon ethanol stress.

The protein localises to the mitochondrion. Functionally, component of MIOREX complexes, large expressome-like assemblies of ribosomes with factors involved in all the steps of post-transcriptional gene expression. The polypeptide is MIOREX complex component 8 (Saccharomyces cerevisiae (strain ATCC 204508 / S288c) (Baker's yeast)).